The sequence spans 149 residues: Oocyte-expressed protein homolog (149 aa).

The tract at residues 1–23 is disordered; it reads MVDDAGTAESQRGKQTPADSLEQ. Residues 8-18 are compositionally biased toward polar residues; it reads AESQRGKQTPA. Positions 49–110 constitute a KH; atypical domain; sequence PLVFYLEAWL…SVQNRVKSML (62 aa).

It belongs to the KHDC1 family. As to quaternary structure, component of the subcortical maternal complex (SCMC), at least composed of NLRP5, KHDC3, OOEP, and TLE6. Within the complex, interacts with NLRP5, KHDC3 and TLE6. As part of the SCMC interacts with the SCMC-associated protein NLRP4F. The SCMC may facilitate translocation of its components between the nuclear and cytoplasmic compartments. Forms a scaffold complex with KHDC3/FILIA, and interacts with BLM and TRIM25 at DNA replication forks.

Its subcellular location is the cytoplasm. The protein localises to the nucleus. Its function is as follows. Component of the subcortical maternal complex (SCMC), a multiprotein complex that plays a key role in early embryonic development. The SCMC complex is a structural constituent of cytoplasmic lattices, which consist in fibrous structures found in the cytoplasm of oocytes and preimplantation embryos. They are required to store maternal proteins critical for embryonic development, such as proteins that control epigenetic reprogramming of the preimplantation embryo, and prevent their degradation or activation. As part of the OOEP-KHDC3 scaffold, recruits BLM and TRIM25 to DNA replication forks, thereby promoting the ubiquitination of BLM by TRIM25, enhancing BLM retainment at replication forks and therefore promoting stalled replication fork restart. Positively regulates the homologous recombination-mediated DNA double-strand break (DSB) repair pathway by regulating ATM activation and RAD51 recruitment to DSBs in oocytes. Thereby contributes to oocyte survival and the resumption and completion of meiosis. In Papio anubis (Olive baboon), this protein is Oocyte-expressed protein homolog (OOEP).